The chain runs to 453 residues: Proton extrusion protein PxcA (453 aa).

A disordered region spans residues 147 to 189 (SQDKETQTLDNKSTNQTNSKLSNNNKISSGQNDSRLESASQKT). The segment covering 154–163 (TLDNKSTNQT) has biased composition (polar residues). Residues 164–175 (NSKLSNNNKISS) are compositionally biased toward low complexity. Residues 176-189 (GQNDSRLESASQKT) are compositionally biased toward polar residues. Transmembrane regions (helical) follow at residues 235 to 255 (FILLLIIVPLLTHQLTKTFLL), 330 to 350 (SIGNVFADLFSVTAFAIVIVS), 377 to 397 (LIILFTDMFVGFHSPHGWEVI), and 413 to 433 (FNFLFIATFPVILDTVLKYWI).

Belongs to the CemA family.

It is found in the cell inner membrane. Its function is as follows. Required for H(+) efflux immediately after light irradiation to form a rapid H(+) concentration gradient across the thylakoid membranes. Together with PxcL, contributes to transient H(+) uptake following dark to light transition. This Crocosphaera subtropica (strain ATCC 51142 / BH68) (Cyanothece sp. (strain ATCC 51142)) protein is Proton extrusion protein PxcA.